A 318-amino-acid chain; its full sequence is MSEILFFSPQPLFSHMMNKNSRLHTHSNIKNTFFSEIGIGISGNSFLLLFHILKFIRGHRPRLTDLPIGLLSLIHLLMLLLMAFIATDIFISRRGWDGIICKFLVYLYGVLRGLSLCTTSMLSVLQAIILSPRSSCLAKLKHKSPHHISCAIIFLSVLYMLISSHILLSITATPNLTMNDFLYVSQSCSLLPLSYLVQSMYSTLLALREVFLISLMVLSTLYMVVLLCRHRKQAQHLQGTSLSPKASAEQRATQTILMLMTFFVLMSIFDSIVSCSRTMFLDDPTSYSIHIFVMHIYATVSPFVFMSTEKHIVNILRG.

Topologically, residues 1 to 32 (MSEILFFSPQPLFSHMMNKNSRLHTHSNIKNT) are extracellular. The helical transmembrane segment at 33–53 (FFSEIGIGISGNSFLLLFHIL) threads the bilayer. Over 54–65 (KFIRGHRPRLTD) the chain is Cytoplasmic. Residues 66–86 (LPIGLLSLIHLLMLLLMAFIA) traverse the membrane as a helical segment. Residues 87–101 (TDIFISRRGWDGIIC) are Extracellular-facing. Cys-101 and Cys-188 are oxidised to a cystine. The helical transmembrane segment at 102–118 (KFLVYLYGVLRGLSLCT) threads the bilayer. Residues 119 to 147 (TSMLSVLQAIILSPRSSCLAKLKHKSPHH) lie on the Cytoplasmic side of the membrane. The helical transmembrane segment at 148–168 (ISCAIIFLSVLYMLISSHILL) threads the bilayer. The Extracellular portion of the chain corresponds to 169–206 (SITATPNLTMNDFLYVSQSCSLLPLSYLVQSMYSTLLA). Asn-175 is a glycosylation site (N-linked (GlcNAc...) asparagine). A helical membrane pass occupies residues 207–227 (LREVFLISLMVLSTLYMVVLL). Residues 228–254 (CRHRKQAQHLQGTSLSPKASAEQRATQ) lie on the Cytoplasmic side of the membrane. The chain crosses the membrane as a helical span at residues 255-275 (TILMLMTFFVLMSIFDSIVSC). Residues 276–285 (SRTMFLDDPT) lie on the Extracellular side of the membrane. The chain crosses the membrane as a helical span at residues 286 to 306 (SYSIHIFVMHIYATVSPFVFM). Topologically, residues 307–318 (STEKHIVNILRG) are cytoplasmic.

This sequence belongs to the G-protein coupled receptor 1 family.

It localises to the cell membrane. Its function is as follows. Putative pheromone receptor implicated in the regulation of social and reproductive behavior. The sequence is that of Vomeronasal type-1 receptor A11 from Mus musculus (Mouse).